Reading from the N-terminus, the 493-residue chain is Glutamyl-tRNA(Gln) amidotransferase subunit A (493 aa).

Active-site charge relay system residues include lysine 78 and serine 158. Catalysis depends on serine 182, which acts as the Acyl-ester intermediate.

This sequence belongs to the amidase family. GatA subfamily. In terms of assembly, heterotrimer of A, B and C subunits.

It carries out the reaction L-glutamyl-tRNA(Gln) + L-glutamine + ATP + H2O = L-glutaminyl-tRNA(Gln) + L-glutamate + ADP + phosphate + H(+). Allows the formation of correctly charged Gln-tRNA(Gln) through the transamidation of misacylated Glu-tRNA(Gln) in organisms which lack glutaminyl-tRNA synthetase. The reaction takes place in the presence of glutamine and ATP through an activated gamma-phospho-Glu-tRNA(Gln). The chain is Glutamyl-tRNA(Gln) amidotransferase subunit A from Methylorubrum extorquens (strain PA1) (Methylobacterium extorquens).